The sequence spans 205 residues: UPF0301 protein Bind_0718 (205 aa).

Belongs to the UPF0301 (AlgH) family.

This is UPF0301 protein Bind_0718 from Beijerinckia indica subsp. indica (strain ATCC 9039 / DSM 1715 / NCIMB 8712).